A 708-amino-acid chain; its full sequence is uncharacterized protein (708 aa).

4 disordered regions span residues M1–S79, A119–R301, Y349–N390, and S410–R461. Positions L65–V74 are enriched in pro residues. Positions D238–A249 are enriched in polar residues. Positions S260–G274 are enriched in low complexity. Over residues S410–R419 the composition is skewed to polar residues. The span at V442–R461 shows a compositional bias: basic and acidic residues.

This is an uncharacterized protein from Arabidopsis thaliana (Mouse-ear cress).